Reading from the N-terminus, the 154-residue chain is Large ribosomal subunit protein uL13 (154 aa).

The protein belongs to the universal ribosomal protein uL13 family. As to quaternary structure, part of the 50S ribosomal subunit.

Functionally, this protein is one of the early assembly proteins of the 50S ribosomal subunit, although it is not seen to bind rRNA by itself. It is important during the early stages of 50S assembly. This chain is Large ribosomal subunit protein uL13, found in Brucella abortus (strain S19).